A 384-amino-acid polypeptide reads, in one-letter code: Cytochrome b (384 aa).

Helical transmembrane passes span 33–53, 77–98, 113–133, and 178–198; these read YGSL…FLAM, WLIR…YLHI, WNVG…GYVL, and FFAF…IHLL. Positions 83 and 97 each coordinate heme b. Heme b-binding residues include H182 and H196. H201 serves as a coordination point for a ubiquinone. Helical transmembrane passes span 226–246, 288–308, 320–340, and 347–367; these read YKDL…ALFT, LGGV…PILH, LSQM…WIGG, and FIII…VLMP.

The protein belongs to the cytochrome b family. The cytochrome bc1 complex contains 3 respiratory subunits (MT-CYB, CYC1 and UQCRFS1), 2 core proteins (UQCRC1 and UQCRC2) and probably 6 low-molecular weight proteins. Requires heme b as cofactor.

It is found in the mitochondrion inner membrane. In terms of biological role, component of the ubiquinol-cytochrome c reductase complex (complex III or cytochrome b-c1 complex) that is part of the mitochondrial respiratory chain. The b-c1 complex mediates electron transfer from ubiquinol to cytochrome c. Contributes to the generation of a proton gradient across the mitochondrial membrane that is then used for ATP synthesis. This chain is Cytochrome b (mt-cyb), found in Anoplogaster cornuta (Common fangtooth).